We begin with the raw amino-acid sequence, 165 residues long: Chorismate pyruvate-lyase (165 aa).

Substrate-binding residues include R77, L115, and E156.

The protein belongs to the UbiC family. As to quaternary structure, monomer.

The protein localises to the cytoplasm. It catalyses the reaction chorismate = 4-hydroxybenzoate + pyruvate. It functions in the pathway cofactor biosynthesis; ubiquinone biosynthesis. Its function is as follows. Removes the pyruvyl group from chorismate, with concomitant aromatization of the ring, to provide 4-hydroxybenzoate (4HB) for the ubiquinone pathway. The polypeptide is Chorismate pyruvate-lyase (Salmonella typhi).